The chain runs to 388 residues: Succinate--CoA ligase [ADP-forming] subunit beta (388 aa).

In terms of domain architecture, ATP-grasp spans 9–244 (KQLFARYGLP…PSQEDSREAH (236 aa)). ATP-binding positions include Lys-46, 53 to 55 (GRG), Glu-99, Thr-102, and Glu-107. Positions 199 and 213 each coordinate Mg(2+). Residues Asn-264 and 321–323 (GIV) contribute to the substrate site.

It belongs to the succinate/malate CoA ligase beta subunit family. In terms of assembly, heterotetramer of two alpha and two beta subunits. Mg(2+) is required as a cofactor.

It carries out the reaction succinate + ATP + CoA = succinyl-CoA + ADP + phosphate. The enzyme catalyses GTP + succinate + CoA = succinyl-CoA + GDP + phosphate. It participates in carbohydrate metabolism; tricarboxylic acid cycle; succinate from succinyl-CoA (ligase route): step 1/1. Its function is as follows. Succinyl-CoA synthetase functions in the citric acid cycle (TCA), coupling the hydrolysis of succinyl-CoA to the synthesis of either ATP or GTP and thus represents the only step of substrate-level phosphorylation in the TCA. The beta subunit provides nucleotide specificity of the enzyme and binds the substrate succinate, while the binding sites for coenzyme A and phosphate are found in the alpha subunit. The chain is Succinate--CoA ligase [ADP-forming] subunit beta from Erwinia tasmaniensis (strain DSM 17950 / CFBP 7177 / CIP 109463 / NCPPB 4357 / Et1/99).